The sequence spans 117 residues: uncharacterized protein (117 aa).

The chain crosses the membrane as a helical span at residues Val10 to Val32.

It localises to the membrane. This is an uncharacterized protein from Rickettsia conorii (strain ATCC VR-613 / Malish 7).